Here is a 932-residue protein sequence, read N- to C-terminus: Alanine--tRNA ligase, mitochondrial (932 aa).

The tract at residues 458–480 is disordered; the sequence is SRLTWNTSSSSSDQTTQQTTQLP. Over residues 464–478 the composition is skewed to low complexity; that stretch reads TSSSSSDQTTQQTTQ. Zn(2+) is bound by residues H610, H614, C713, and H717.

This sequence belongs to the class-II aminoacyl-tRNA synthetase family. As to quaternary structure, monomer. Requires Zn(2+) as cofactor.

Its subcellular location is the mitochondrion. It carries out the reaction tRNA(Ala) + L-alanine + ATP = L-alanyl-tRNA(Ala) + AMP + diphosphate. Catalyzes the attachment of alanine to tRNA(Ala) in a two-step reaction: alanine is first activated by ATP to form Ala-AMP and then transferred to the acceptor end of tRNA(Ala). Also edits incorrectly charged tRNA(Ala) via its editing domain. The sequence is that of Alanine--tRNA ligase, mitochondrial (malaS) from Dictyostelium discoideum (Social amoeba).